The chain runs to 332 residues: Fructose-1,6-bisphosphatase class 1 (332 aa).

4 residues coordinate Mg(2+): E89, D110, L112, and D113. Substrate contacts are provided by residues 113–116 (DGSS), N206, Y239, 257–259 (YLY), and K269. E275 contacts Mg(2+).

The protein belongs to the FBPase class 1 family. In terms of assembly, homotetramer. Mg(2+) serves as cofactor.

It is found in the cytoplasm. The catalysed reaction is beta-D-fructose 1,6-bisphosphate + H2O = beta-D-fructose 6-phosphate + phosphate. It participates in carbohydrate biosynthesis; gluconeogenesis. This Cronobacter sakazakii (strain ATCC BAA-894) (Enterobacter sakazakii) protein is Fructose-1,6-bisphosphatase class 1.